A 430-amino-acid chain; its full sequence is Serine--tRNA ligase (430 aa).

237-239 serves as a coordination point for L-serine; that stretch reads TAE. 268–270 lines the ATP pocket; that stretch reads RSE. Glu-291 serves as a coordination point for L-serine. 355 to 358 is an ATP binding site; the sequence is EISS. Ser-391 is an L-serine binding site.

This sequence belongs to the class-II aminoacyl-tRNA synthetase family. Type-1 seryl-tRNA synthetase subfamily. Homodimer. The tRNA molecule binds across the dimer.

It localises to the cytoplasm. The catalysed reaction is tRNA(Ser) + L-serine + ATP = L-seryl-tRNA(Ser) + AMP + diphosphate + H(+). It carries out the reaction tRNA(Sec) + L-serine + ATP = L-seryl-tRNA(Sec) + AMP + diphosphate + H(+). It participates in aminoacyl-tRNA biosynthesis; selenocysteinyl-tRNA(Sec) biosynthesis; L-seryl-tRNA(Sec) from L-serine and tRNA(Sec): step 1/1. Functionally, catalyzes the attachment of serine to tRNA(Ser). Is also able to aminoacylate tRNA(Sec) with serine, to form the misacylated tRNA L-seryl-tRNA(Sec), which will be further converted into selenocysteinyl-tRNA(Sec). This is Serine--tRNA ligase from Salmonella enteritidis PT4 (strain P125109).